We begin with the raw amino-acid sequence, 96 residues long: Protein RnfH (96 aa).

This sequence belongs to the UPF0125 (RnfH) family.

The polypeptide is Protein RnfH (Escherichia coli O139:H28 (strain E24377A / ETEC)).